The primary structure comprises 159 residues: Succinate dehydrogenase [ubiquinone] cytochrome b small subunit, mitochondrial (159 aa).

The transit peptide at 1–56 directs the protein to the mitochondrion; it reads MAVLLKLGVLCSGQGARALSLRSRAVRPAFVSAFLQDQPTPGWRGTQHIHLSPSHQ. Residues 57–63 lie on the Mitochondrial matrix side of the membrane; it reads SGSKAAS. The chain crosses the membrane as a helical span at residues 64–85; sequence LHWTSERVVSVLLLGLIPAGYL. Residues 86–90 are Mitochondrial intermembrane-facing; sequence NPCSV. Residues 91 to 111 traverse the membrane as a helical segment; that stretch reads VDYSLAAALTLHSHWGIGQVV. Residue histidine 102 coordinates heme b. At 112–120 the chain is on the mitochondrial matrix side; sequence TDYVHGDAL. Tyrosine 114 lines the a ubiquinone pocket. Residues 121–142 form a helical membrane-spanning segment; sequence QKATKAGLLAVSALTFAGLCYF. Residues 143 to 159 lie on the Mitochondrial intermembrane side of the membrane; it reads NYHDVGICRAVAMLWKL.

Belongs to the CybS family. In terms of assembly, component of complex II composed of four subunits: the flavoprotein (FP) SDHA, iron-sulfur protein (IP) SDHB, and a cytochrome b560 composed of SDHC and SDHD.

Its subcellular location is the mitochondrion inner membrane. The protein operates within carbohydrate metabolism; tricarboxylic acid cycle. Its function is as follows. Membrane-anchoring subunit of succinate dehydrogenase (SDH) that is involved in complex II of the mitochondrial electron transport chain and is responsible for transferring electrons from succinate to ubiquinone (coenzyme Q). SDH also oxidizes malate to the non-canonical enol form of oxaloacetate, enol-oxaloacetate. Enol-oxaloacetate, which is a potent inhibitor of the succinate dehydrogenase activity, is further isomerized into keto-oxaloacetate. The polypeptide is Succinate dehydrogenase [ubiquinone] cytochrome b small subunit, mitochondrial (Sdhd) (Rattus norvegicus (Rat)).